The sequence spans 200 residues: Ribonuclease HII (200 aa).

Residues 14–200 form the RNase H type-2 domain; the sequence is SRLAGVDEVG…FAPVKQWQLL (187 aa). Aspartate 20, glutamate 21, and aspartate 112 together coordinate a divalent metal cation.

The protein belongs to the RNase HII family. Mn(2+) is required as a cofactor. Requires Mg(2+) as cofactor.

The protein resides in the cytoplasm. The catalysed reaction is Endonucleolytic cleavage to 5'-phosphomonoester.. In terms of biological role, endonuclease that specifically degrades the RNA of RNA-DNA hybrids. This Chromohalobacter salexigens (strain ATCC BAA-138 / DSM 3043 / CIP 106854 / NCIMB 13768 / 1H11) protein is Ribonuclease HII.